The chain runs to 397 residues: CCA-adding enzyme (397 aa).

ATP-binding residues include G26 and R29. Residues G26 and R29 each contribute to the CTP site. Mg(2+)-binding residues include D39 and D41. The ATP site is built by R110, D153, R156, R159, and R162. CTP-binding residues include R110, D153, R156, R159, and R162.

It belongs to the tRNA nucleotidyltransferase/poly(A) polymerase family. Bacterial CCA-adding enzyme type 3 subfamily. Homodimer. Mg(2+) serves as cofactor.

It carries out the reaction a tRNA precursor + 2 CTP + ATP = a tRNA with a 3' CCA end + 3 diphosphate. It catalyses the reaction a tRNA with a 3' CCA end + 2 CTP + ATP = a tRNA with a 3' CCACCA end + 3 diphosphate. In terms of biological role, catalyzes the addition and repair of the essential 3'-terminal CCA sequence in tRNAs without using a nucleic acid template. Adds these three nucleotides in the order of C, C, and A to the tRNA nucleotide-73, using CTP and ATP as substrates and producing inorganic pyrophosphate. tRNA 3'-terminal CCA addition is required both for tRNA processing and repair. Also involved in tRNA surveillance by mediating tandem CCA addition to generate a CCACCA at the 3' terminus of unstable tRNAs. While stable tRNAs receive only 3'-terminal CCA, unstable tRNAs are marked with CCACCA and rapidly degraded. The protein is CCA-adding enzyme of Bacillus cereus (strain ATCC 10987 / NRS 248).